A 169-amino-acid polypeptide reads, in one-letter code: Putative phosphoesterase SSP1770 (169 aa).

Histidine 34 (proton donor) is an active-site residue. Short sequence motifs (HXTX) lie at residues 34-37 (HITI) and 115-118 (HFTI). The Proton acceptor role is filled by histidine 115.

Belongs to the 2H phosphoesterase superfamily. YjcG family.

The protein is Putative phosphoesterase SSP1770 of Staphylococcus saprophyticus subsp. saprophyticus (strain ATCC 15305 / DSM 20229 / NCIMB 8711 / NCTC 7292 / S-41).